Reading from the N-terminus, the 270-residue chain is Formamidopyrimidine-DNA glycosylase (270 aa).

P2 serves as the catalytic Schiff-base intermediate with DNA. The active-site Proton donor is the E3. The active-site Proton donor; for beta-elimination activity is K59. The DNA site is built by H91, R110, and K151. An FPG-type zinc finger spans residues 236–270 (RVYGRDKEPCVTCGQQVKSKVLGGRNTFWCSRCQK). Catalysis depends on R260, which acts as the Proton donor; for delta-elimination activity.

It belongs to the FPG family. As to quaternary structure, monomer. Zn(2+) serves as cofactor.

It carries out the reaction Hydrolysis of DNA containing ring-opened 7-methylguanine residues, releasing 2,6-diamino-4-hydroxy-5-(N-methyl)formamidopyrimidine.. The enzyme catalyses 2'-deoxyribonucleotide-(2'-deoxyribose 5'-phosphate)-2'-deoxyribonucleotide-DNA = a 3'-end 2'-deoxyribonucleotide-(2,3-dehydro-2,3-deoxyribose 5'-phosphate)-DNA + a 5'-end 5'-phospho-2'-deoxyribonucleoside-DNA + H(+). Functionally, involved in base excision repair of DNA damaged by oxidation or by mutagenic agents. Acts as a DNA glycosylase that recognizes and removes damaged bases. Has a preference for oxidized purines, such as 7,8-dihydro-8-oxoguanine (8-oxoG). Has AP (apurinic/apyrimidinic) lyase activity and introduces nicks in the DNA strand. Cleaves the DNA backbone by beta-delta elimination to generate a single-strand break at the site of the removed base with both 3'- and 5'-phosphates. The chain is Formamidopyrimidine-DNA glycosylase from Bdellovibrio bacteriovorus (strain ATCC 15356 / DSM 50701 / NCIMB 9529 / HD100).